The primary structure comprises 418 residues: Putative ion-transport protein YfeO (418 aa).

The next 12 membrane-spanning stretches (helical) occupy residues Leu10–Val30, Asp54–Ile74, Ala99–Pro119, Glu120–Pro140, Ile149–Ile169, Leu186–Pro206, Ile223–Cys243, Val258–Val278, Asp300–Phe320, Gly322–His342, Val343–Val363, and Leu371–Met391.

It belongs to the chloride channel (TC 2.A.49) family.

The protein localises to the cell membrane. This Escherichia coli (strain 55989 / EAEC) protein is Putative ion-transport protein YfeO.